Reading from the N-terminus, the 706-residue chain is D-(-)-3-hydroxybutyrate oligomer hydrolase (706 aa).

An N-terminal signal peptide occupies residues 1–27 (MTIIIAGKNTLTLTSLAAAVLALGACG). Catalysis depends on Ser-311, which acts as the Charge relay system.

The protein belongs to the D-(-)-3-hydroxybutyrate oligomer hydrolase family.

The protein resides in the secreted. It carries out the reaction (3R)-hydroxybutanoate dimer + H2O = 2 (R)-3-hydroxybutanoate + H(+). Its pathway is lipid metabolism; butanoate metabolism. In terms of biological role, participates in the degradation of poly-3-hydroxybutyrate (PHB). It works downstream of poly(3-hydroxybutyrate) depolymerase, hydrolyzing D(-)-3-hydroxybutyrate oligomers of various length (3HB-oligomers) into 3HB-monomers. The protein is D-(-)-3-hydroxybutyrate oligomer hydrolase of Polaromonas naphthalenivorans (strain CJ2).